A 174-amino-acid polypeptide reads, in one-letter code: Protein GrpE (174 aa).

Residues 1 to 35 (MAQDIKNEEVEEVQEEEVVETAEETTPEKSELDLA) form a disordered region. The span at 9–25 (EVEEVQEEEVVETAEET) shows a compositional bias: acidic residues. A compositionally biased stretch (basic and acidic residues) spans 26–35 (TPEKSELDLA).

The protein belongs to the GrpE family. In terms of assembly, homodimer.

It localises to the cytoplasm. Its function is as follows. Participates actively in the response to hyperosmotic and heat shock by preventing the aggregation of stress-denatured proteins, in association with DnaK and GrpE. It is the nucleotide exchange factor for DnaK and may function as a thermosensor. Unfolded proteins bind initially to DnaJ; upon interaction with the DnaJ-bound protein, DnaK hydrolyzes its bound ATP, resulting in the formation of a stable complex. GrpE releases ADP from DnaK; ATP binding to DnaK triggers the release of the substrate protein, thus completing the reaction cycle. Several rounds of ATP-dependent interactions between DnaJ, DnaK and GrpE are required for fully efficient folding. In Streptococcus pneumoniae (strain ATCC 700669 / Spain 23F-1), this protein is Protein GrpE.